Reading from the N-terminus, the 267-residue chain is MKKILLTNDDGYHAKGIKALEQALEEMAEIYVVAPKHEKSACSQCITITAPLRAEKIKGKEGRHYRIDDGTPSDCVYLAINELFKHVCFDLVISGINLGSNMGEDTIYSGTVAGAIEGTIQGVPSIAISQILSNKNKNTPLSFDLAQKIIQDLVQNIFKNGYPLKGRKLLNVNVPNCSLQEYKGERITPKGYRLYKKEVHKRTDPKNESYFWLGLHPLEWQKRENEDRLSDFDAIASNHASITPLNLDLTSYDDLKSLESWHEGMLK.

Aspartate 9, aspartate 10, serine 40, and asparagine 97 together coordinate a divalent metal cation.

It belongs to the SurE nucleotidase family. A divalent metal cation serves as cofactor.

Its subcellular location is the cytoplasm. The catalysed reaction is a ribonucleoside 5'-phosphate + H2O = a ribonucleoside + phosphate. In terms of biological role, nucleotidase that shows phosphatase activity on nucleoside 5'-monophosphates. The sequence is that of 5'-nucleotidase SurE from Helicobacter pylori (strain G27).